The primary structure comprises 246 residues: Acetoacetate decarboxylase (246 aa).

The Schiff-base intermediate with acetoacetate role is filled by K115.

Belongs to the ADC family.

It catalyses the reaction acetoacetate + H(+) = acetone + CO2. Its function is as follows. Catalyzes the conversion of acetoacetate to acetone and carbon dioxide. The protein is Acetoacetate decarboxylase of Clostridium beijerinckii (Clostridium MP).